Reading from the N-terminus, the 729-residue chain is Adenosylcobalamin-dependent ribonucleoside-triphosphate reductase (729 aa).

Cysteines 189 and 438 form a disulfide. Residues Cys-427 and Glu-429 contribute to the active site.

The protein belongs to the class II ribonucleoside-triphosphate reductase family. As to quaternary structure, monomer. Adenosylcob(III)alamin is required as a cofactor.

It carries out the reaction a 2'-deoxyribonucleoside 5'-triphosphate + [thioredoxin]-disulfide + H2O = a ribonucleoside 5'-triphosphate + [thioredoxin]-dithiol. This chain is Adenosylcobalamin-dependent ribonucleoside-triphosphate reductase (rnr), found in Euglena gracilis.